The sequence spans 474 residues: tRNA-2-methylthio-N(6)-dimethylallyladenosine synthase (474 aa).

In terms of domain architecture, MTTase N-terminal spans 3–120 (KKLHIKTWGC…LPEMINHVQG (118 aa)). The [4Fe-4S] cluster site is built by Cys12, Cys49, Cys83, Cys157, Cys161, and Cys164. The Radical SAM core domain occupies 143-375 (RAEGPTAFVS…QQRISQQAME (233 aa)). A TRAM domain is found at 378 to 441 (RKMVGTVQRV…ASSLRGILLR (64 aa)).

This sequence belongs to the methylthiotransferase family. MiaB subfamily. Monomer. Requires [4Fe-4S] cluster as cofactor.

Its subcellular location is the cytoplasm. It carries out the reaction N(6)-dimethylallyladenosine(37) in tRNA + (sulfur carrier)-SH + AH2 + 2 S-adenosyl-L-methionine = 2-methylsulfanyl-N(6)-dimethylallyladenosine(37) in tRNA + (sulfur carrier)-H + 5'-deoxyadenosine + L-methionine + A + S-adenosyl-L-homocysteine + 2 H(+). Its function is as follows. Catalyzes the methylthiolation of N6-(dimethylallyl)adenosine (i(6)A), leading to the formation of 2-methylthio-N6-(dimethylallyl)adenosine (ms(2)i(6)A) at position 37 in tRNAs that read codons beginning with uridine. This Yersinia pseudotuberculosis serotype O:1b (strain IP 31758) protein is tRNA-2-methylthio-N(6)-dimethylallyladenosine synthase.